A 347-amino-acid chain; its full sequence is Dihydroorotate dehydrogenase (quinone) (347 aa).

FMN-binding positions include 62–66 (AGLDK) and Thr86. Lys66 is a substrate binding site. 111–115 (NRMGF) contacts substrate. Residues Asn142 and Asn175 each coordinate FMN. Asn175 is a binding site for substrate. The Nucleophile role is filled by Ser178. Asn180 serves as a coordination point for substrate. FMN contacts are provided by Lys220 and Thr248. Substrate is bound at residue 249–250 (NT). Residues Gly271, Gly300, and 321–322 (YS) contribute to the FMN site.

This sequence belongs to the dihydroorotate dehydrogenase family. Type 2 subfamily. In terms of assembly, monomer. FMN serves as cofactor.

It localises to the cell membrane. The catalysed reaction is (S)-dihydroorotate + a quinone = orotate + a quinol. It functions in the pathway pyrimidine metabolism; UMP biosynthesis via de novo pathway; orotate from (S)-dihydroorotate (quinone route): step 1/1. Catalyzes the conversion of dihydroorotate to orotate with quinone as electron acceptor. This Dechloromonas aromatica (strain RCB) protein is Dihydroorotate dehydrogenase (quinone).